Consider the following 353-residue polypeptide: Photosystem II protein D1 (353 aa).

T2 bears the N-acetylthreonine mark. Phosphothreonine is present on T2. The next 3 membrane-spanning stretches (helical) occupy residues 29–46 (YIGW…TATS), 118–133 (HFLL…EWEL), and 142–156 (WIAV…AATA). H118 lines the chlorophyll a pocket. Y126 provides a ligand contact to pheophytin a. D170 and E189 together coordinate [CaMn4O5] cluster. A helical membrane pass occupies residues 197–218 (FHMLGVAGVFGGSLFSAMHGSL). H198 contacts chlorophyll a. A quinone is bound by residues H215 and 264–265 (SF). H215 lines the Fe cation pocket. Residue H272 participates in Fe cation binding. The helical transmembrane segment at 274–288 (FLAAWPVAGIWFTAL) threads the bilayer. Residues H332, E333, D342, and A344 each contribute to the [CaMn4O5] cluster site. Positions 345–353 (AVESISIGG) are excised as a propeptide.

This sequence belongs to the reaction center PufL/M/PsbA/D family. As to quaternary structure, PSII is composed of 1 copy each of membrane proteins PsbA, PsbB, PsbC, PsbD, PsbE, PsbF, PsbH, PsbI, PsbJ, PsbK, PsbL, PsbM, PsbT, PsbX, PsbY, PsbZ, Psb30/Ycf12, at least 3 peripheral proteins of the oxygen-evolving complex and a large number of cofactors. It forms dimeric complexes. Requires The D1/D2 heterodimer binds P680, chlorophylls that are the primary electron donor of PSII, and subsequent electron acceptors. It shares a non-heme iron and each subunit binds pheophytin, quinone, additional chlorophylls, carotenoids and lipids. D1 provides most of the ligands for the Mn4-Ca-O5 cluster of the oxygen-evolving complex (OEC). There is also a Cl(-1) ion associated with D1 and D2, which is required for oxygen evolution. The PSII complex binds additional chlorophylls, carotenoids and specific lipids. as cofactor. Tyr-161 forms a radical intermediate that is referred to as redox-active TyrZ, YZ or Y-Z. In terms of processing, C-terminally processed by CTPA; processing is essential to allow assembly of the oxygen-evolving complex and thus photosynthetic growth.

Its subcellular location is the plastid. The protein localises to the chloroplast thylakoid membrane. It carries out the reaction 2 a plastoquinone + 4 hnu + 2 H2O = 2 a plastoquinol + O2. Functionally, photosystem II (PSII) is a light-driven water:plastoquinone oxidoreductase that uses light energy to abstract electrons from H(2)O, generating O(2) and a proton gradient subsequently used for ATP formation. It consists of a core antenna complex that captures photons, and an electron transfer chain that converts photonic excitation into a charge separation. The D1/D2 (PsbA/PsbD) reaction center heterodimer binds P680, the primary electron donor of PSII as well as several subsequent electron acceptors. The chain is Photosystem II protein D1 from Pinus contorta (Shore pine).